Here is a 354-residue protein sequence, read N- to C-terminus: Dihydroflavonol 4-reductase (354 aa).

The NADP(+) site is built by Lys44 and Tyr163.

Belongs to the NAD(P)-dependent epimerase/dehydratase family. Dihydroflavonol-4-reductase subfamily.

The catalysed reaction is a (2R,3S,4S)-leucoanthocyanidin + NADP(+) = a (2R,3R)-dihydroflavonol + NADPH + H(+). It catalyses the reaction (2S)-flavan-4-ol + NADP(+) = (2S)-flavanone + NADPH + H(+). It functions in the pathway pigment biosynthesis; anthocyanin biosynthesis. Functionally, bifunctional enzyme involved in flavonoid metabolism. The sequence is that of Dihydroflavonol 4-reductase (ANT18) from Hordeum vulgare (Barley).